Here is a 170-residue protein sequence, read N- to C-terminus: Calcineurin subunit B type 1 (170 aa).

EF-hand domains are found at residues 18–46 (DEIRRLGKRFRKLDLDNSGALSIDEFMSL), 50–85 (QQNPLVQRVIDIFDADGNGEVDFKEFIQGVSQFSVR), 87–122 (DKLSKLRFAFRIYDMDNDGYISNGELFQVLKMMVGN), and 128–163 (QLQQIVDKTICFADKDEDGKISFDEFCSVVGNTDIH). Positions 31, 33, 35, 42, 63, 65, 67, 69, 74, 100, 102, 104, 106, 111, 141, 143, 145, 147, and 152 each coordinate Ca(2+).

The protein belongs to the calcineurin regulatory subunit family. Composed of two components (A and B), the A component is the catalytic subunit and the B component confers calcium sensitivity.

Functionally, calcineurin is a calcium-binding and calmodulin-binding protein found in all cells from yeast to mammals, and a calcium-dependent, calmodulin-stimulated protein phosphatase. This chain is Calcineurin subunit B type 1 (CanB), found in Drosophila melanogaster (Fruit fly).